We begin with the raw amino-acid sequence, 541 residues long: MTTVASLSLLPHLLIKPSFRCCSRKGVGRYGGIKVYAVLGDDGADYAKNNAWEALFHVDDPGPRVPIAKGKFLDVNQALEVVRFDIQYCDWRARQDLLTIMVLHNKVVEVLNPLAREFKSIGTLRKELAELQEELAKAHNQVHLSETRVSSALDKLAQMETLVNDRLLQDGGSSASTAECTSLAPSTSSASRVVNKKPPRRSLNVSGPVQPYNPSLKNFWYPVAFSSDLKDDTMVPIDCFEEQWVIFRGKDGRPGCVMNTCAHRACPLHLGSVNEGRIQCPYHGWEYSTDGKCEKMPSTKMLNVRIRSLPCFEQEGMVWIWPGNDPPKSTIPSLLPPSGFTIHAEIVMELPVEHGLLLDNLLDLAHAPFTHTSTFAKGWSVPSLVKFLTPSSGLQGYWDPYPIDMEFRPPCMVLSTIGISKPGKLEGKSTKQCSTHLHQLHICLPSSRNKTRLLYRMSLDFAPWIKHVPFMHILWSHFAEKVLNEDLRLVLGQQERMINGANVWNWPVSYDKLGIRYRLWRDAIERGVDRLPFSNQSESGS.

A coiled-coil region spans residues 114-151 (LAREFKSIGTLRKELAELQEELAKAHNQVHLSETRVSS). The span at 178–192 (AECTSLAPSTSSASR) shows a compositional bias: polar residues. Residues 178-208 (AECTSLAPSTSSASRVVNKKPPRRSLNVSGP) are disordered. In terms of domain architecture, Rieske spans 220–320 (WYPVAFSSDL…CFEQEGMVWI (101 aa)). 4 residues coordinate [2Fe-2S] cluster: cysteine 261, histidine 263, cysteine 280, and histidine 283. Fe cation contacts are provided by aspartate 359, aspartate 363, histidine 366, and histidine 371.

In terms of tissue distribution, expressed in leaves and germinating seedlings, but not in sheaths and roots.

It localises to the plastid. The protein localises to the chloroplast membrane. It is found in the chloroplast thylakoid membrane. It catalyses the reaction chlorophyllide a + 2 NADPH + 2 O2 + 2 H(+) = chlorophyllide b + 2 NADP(+) + 3 H2O. In terms of biological role, catalyzes a two-step oxygenase reaction involved in the synthesis of chlorophyll b. Acts specifically on the non-esterified chlorophyllide a and not on chlorophyll a. The chain is Chlorophyllide a oxygenase, chloroplastic (CAO) from Oryza sativa subsp. japonica (Rice).